Here is a 601-residue protein sequence, read N- to C-terminus: Cdc42-interacting protein 4 (601 aa).

The required for podosome formation and interaction with AKAP9 and microtubules stretch occupies residues 1 to 117 (MDWGTELWDQ…EMKQERKMHF (117 aa)). Residues 1–117 (MDWGTELWDQ…EMKQERKMHF (117 aa)) are required for translocation to the plasma membrane in response to insulin. An F-BAR domain is found at 1–264 (MDWGTELWDQ…AANAVDPKND (264 aa)). Residues 67 to 259 (FSQQQSFVQI…EGMKVAANAV (193 aa)) adopt a coiled-coil conformation. Disordered regions lie at residues 280-358 (GDVE…GRDP), 390-420 (DFSH…EVDQ), and 479-543 (RGDS…SPIG). Positions 289–302 (QPMNRAPSDSSLGT) are enriched in polar residues. The segment at 293–537 (RAPSDSSLGT…TEFDEDFEEE (245 aa)) is interaction with CDC42. An interaction with PDE6G region spans residues 293–601 (RAPSDSSLGT…PTSYLRVTLN (309 aa)). 3 positions are modified to phosphoserine: S296, S298, and S299. The span at 314–329 (GRSRTKRWPFGKKNKP) shows a compositional bias: basic residues. S335 carries the post-translational modification Phosphoserine. The segment covering 336–346 (PLGGPVPSALP) has biased composition (low complexity). At S351 the chain carries Phosphoserine. A coiled-coil region spans residues 388–481 (TEDFSHLPPE…ESRVLSNRGD (94 aa)). Positions 393–470 (HLPPEQQRKR…VQKYEAWLAE (78 aa)) constitute an REM-1 domain. The span at 407–420 (LEERSRELQKEVDQ) shows a compositional bias: basic and acidic residues. The tract at residues 471-601 (AESRVLSNRG…PTSYLRVTLN (131 aa)) is required for interaction with FASLG and localization to lysosomes. S482 bears the Phosphoserine mark. Positions 487–541 (ARPPDPPASAPPDSSSNSASQDTKESSEEPPSEESQDTPIYTEFDEDFEEEPTSP) are interaction with DNM2 and WASL. Over residues 497-506 (PPDSSSNSAS) the composition is skewed to low complexity. A compositionally biased stretch (acidic residues) spans 529–538 (EFDEDFEEEP). Positions 529-601 (EFDEDFEEEP…PTSYLRVTLN (73 aa)) are interaction with DNM1 and WASL. The required for podosome formation stretch occupies residues 538–601 (PTSPIGHCVA…PTSYLRVTLN (64 aa)). Residues 540-601 (SPIGHCVAIY…PTSYLRVTLN (62 aa)) enclose the SH3 domain. The tract at residues 544 to 601 (HCVAIYHFEGSSEGTISMAEGEDLSLMEEDKGDGWTRVRRKEGGEGYVPTSYLRVTLN) is interaction with WAS. The segment at 546–601 (VAIYHFEGSSEGTISMAEGEDLSLMEEDKGDGWTRVRRKEGGEGYVPTSYLRVTLN) is interaction with ARHGAP17, DAAM1, DIAPH1 and DIAPH2.

The protein belongs to the FNBP1 family. In terms of assembly, interacts specifically with GTP-bound RHOQ. Interacts with DNM2 and PDE6G. Homodimerizes, the dimers can polymerize end-to-end to form filamentous structures. Interacts specifically with GTP-bound CDC42. Interacts with AKAP9, ARHGAP17, DAAM1, DIAPH1, DIAPH2, DNM1, FASLG/FASL, GAPVD1, LYN, microtubules, SRC, WAS/WASP and WASL/N-WASP. Interacts with the ligand binding domain of the thyroid receptor (TR) in the presence of thyroid hormone. May interact with CTNNB1 and HD/HTT. Tyrosine phosphorylated. Also phosphorylated by PKA. In terms of tissue distribution, expressed in brain, colon, heart, kidney, liver, lung, megakaryocyte, ovary, pancreas, peripheral blood lymphocytes, placenta, prostate, skeletal muscle, small intestine, spleen, testis, thymus and trachea.

The protein resides in the cytoplasm. It is found in the cytoskeleton. It localises to the cell cortex. Its subcellular location is the lysosome. The protein localises to the golgi apparatus. The protein resides in the cell membrane. It is found in the cell projection. It localises to the phagocytic cup. Its subcellular location is the perinuclear region. In terms of biological role, required for translocation of GLUT4 to the plasma membrane in response to insulin signaling. Required to coordinate membrane tubulation with reorganization of the actin cytoskeleton during endocytosis. Binds to lipids such as phosphatidylinositol 4,5-bisphosphate and phosphatidylserine and promotes membrane invagination and the formation of tubules. Also promotes CDC42-induced actin polymerization by recruiting WASL/N-WASP which in turn activates the Arp2/3 complex. Actin polymerization may promote the fission of membrane tubules to form endocytic vesicles. Required for the formation of podosomes, actin-rich adhesion structures specific to monocyte-derived cells. May be required for the lysosomal retention of FASLG/FASL. This is Cdc42-interacting protein 4 (TRIP10) from Homo sapiens (Human).